The primary structure comprises 192 residues: Fe/S biogenesis protein NfuA (192 aa).

The [4Fe-4S] cluster site is built by C149 and C152.

This sequence belongs to the NfuA family. As to quaternary structure, homodimer. Requires [4Fe-4S] cluster as cofactor.

Its function is as follows. Involved in iron-sulfur cluster biogenesis. Binds a 4Fe-4S cluster, can transfer this cluster to apoproteins, and thereby intervenes in the maturation of Fe/S proteins. Could also act as a scaffold/chaperone for damaged Fe/S proteins. The polypeptide is Fe/S biogenesis protein NfuA (Shewanella sp. (strain ANA-3)).